A 597-amino-acid chain; its full sequence is Gamma-terpinene synthase, chloroplastic (597 aa).

The N-terminal 47 residues, 1-47 (MATLSMQVSILNKQLKNLNSFGMRASKLPLVARRVDVSTTRLRPICS), are a transit peptide targeting the chloroplast. Mn(2+) contacts are provided by aspartate 350 and aspartate 354. The DDXXD motif signature appears at 350 to 354 (DDVYD). Homodimerization regions lie at residues 356–362 (YGTLDEL) and 428–464 (EAKWYYAGYTPTLAEYLENAKVSISSPTIISQVYFTL). Residues aspartate 494 and glutamate 502 each coordinate Mn(2+).

This sequence belongs to the terpene synthase family. Homodimer. It depends on Mn(2+) as a cofactor. The cofactor is Mg(2+).

The protein localises to the plastid. The protein resides in the chloroplast. The catalysed reaction is (2E)-geranyl diphosphate = gamma-terpinene + diphosphate. It participates in secondary metabolite biosynthesis; terpenoid biosynthesis. Involved in the biosynthesis of phenolic monoterpenes natural products thymol and carvacrol which have a broad range of biological activities acting as antimicrobial compounds, insecticides, antioxidants and pharmaceutical agents. Monoterpene synthase which catalyzes the conversion of geranyl diphosphate (GPP) to gamma-terpinene and minor amounts of other monoterpenes (e.g. alpha-thujene, alpha-terpinene, myrcene, sabinene, (+)-R-limonene, alpha-pinene and alpha-phellandrene). The sequence is that of Gamma-terpinene synthase, chloroplastic from Thymus caespititius (Cretan thyme).